Reading from the N-terminus, the 215-residue chain is Uracil phosphoribosyltransferase (215 aa).

5-phospho-alpha-D-ribose 1-diphosphate contacts are provided by residues arginine 77, arginine 102, and 129 to 137 (DPMLATGGS). Residues isoleucine 193 and 198–200 (GDA) each bind uracil. 5-phospho-alpha-D-ribose 1-diphosphate is bound at residue aspartate 199.

It belongs to the UPRTase family. It depends on Mg(2+) as a cofactor.

The catalysed reaction is UMP + diphosphate = 5-phospho-alpha-D-ribose 1-diphosphate + uracil. It functions in the pathway pyrimidine metabolism; UMP biosynthesis via salvage pathway; UMP from uracil: step 1/1. Its activity is regulated as follows. Allosterically activated by GTP. Its function is as follows. Catalyzes the conversion of uracil and 5-phospho-alpha-D-ribose 1-diphosphate (PRPP) to UMP and diphosphate. This Corynebacterium urealyticum (strain ATCC 43042 / DSM 7109) protein is Uracil phosphoribosyltransferase.